A 277-amino-acid chain; its full sequence is Intercellular adhesion molecule 2 (277 aa).

Residues 1-22 form the signal peptide; that stretch reads MSSFACWSLSLLILFYSPGSGE. The Extracellular segment spans residues 23 to 222; sequence KAFEVYIWSE…EVYEPMQDNQ (200 aa). Ig-like C2-type domains are found at residues 39–98 and 127–196; these read TESW…CSGK and GEDF…LDLR. N-linked (GlcNAc...) asparagine glycans are attached at residues asparagine 45, asparagine 82, asparagine 158, asparagine 176, and asparagine 186. Disulfide bonds link cysteine 46–cysteine 91, cysteine 50–cysteine 95, and cysteine 134–cysteine 189. A helical transmembrane segment spans residues 223–247; it reads MVIIIVVVSILLFLFVTSVLLCFIF. The Cytoplasmic portion of the chain corresponds to 248–277; that stretch reads GQHWHRRRTGTYGVLAAWRRLPRAFRARPV. The segment at 250-277 is required for interaction with EZR, MSN and RDX and co-localization to microvilli; that stretch reads HWHRRRTGTYGVLAAWRRLPRAFRARPV.

Belongs to the immunoglobulin superfamily. ICAM family. Interacts with RDX, EZR and MSN. Expressed in endothelial cells and leukocytes. High levels found in lung.

The protein resides in the membrane. The protein localises to the cell projection. Its subcellular location is the microvillus. ICAM proteins are ligands for the leukocyte adhesion protein LFA-1 (integrin alpha-L/beta-2). ICAM2 may play a role in lymphocyte recirculation by blocking LFA-1-dependent cell adhesion. It mediates adhesive interactions important for antigen-specific immune response, NK-cell mediated clearance, lymphocyte recirculation, and other cellular interactions important for immune response and surveillance. The chain is Intercellular adhesion molecule 2 (Icam2) from Mus musculus (Mouse).